The chain runs to 431 residues: Mevalonate kinase (431 aa).

Residues K13, S139, and 144 to 150 (GAGLGSS) contribute to the ATP site. Residues S150 and E198 each contribute to the Mg(2+) site. The active-site Proton acceptor is the D209.

It belongs to the GHMP kinase family. Mevalonate kinase subfamily. As to quaternary structure, homodimer.

It localises to the cytoplasm. It is found in the cytosol. It carries out the reaction (R)-mevalonate + ATP = (R)-5-phosphomevalonate + ADP + H(+). It functions in the pathway isoprenoid biosynthesis; isopentenyl diphosphate biosynthesis via mevalonate pathway; isopentenyl diphosphate from (R)-mevalonate: step 1/3. Mevalonate kinase; part of the second module of ergosterol biosynthesis pathway that includes the middle steps of the pathway. ERG12 converts mevalonate into 5-phosphomevalonate. The second module is carried out in the vacuole and involves the formation of farnesyl diphosphate, which is also an important intermediate in the biosynthesis of ubiquinone, dolichol, heme and prenylated proteins. Activity by the mevalonate kinase ERG12 first converts mevalonate into 5-phosphomevalonate. 5-phosphomevalonate is then further converted to 5-diphosphomevalonate by the phosphomevalonate kinase ERG8. The diphosphomevalonate decarboxylase MVD then produces isopentenyl diphosphate. The isopentenyl-diphosphate delta-isomerase IDI1 then catalyzes the 1,3-allylic rearrangement of the homoallylic substrate isopentenyl (IPP) to its highly electrophilic allylic isomer, dimethylallyl diphosphate (DMAPP). Finally the farnesyl diphosphate synthase ERG20 catalyzes the sequential condensation of isopentenyl pyrophosphate with dimethylallyl pyrophosphate, and then with the resultant geranylpyrophosphate to the ultimate product farnesyl pyrophosphate. This Candida albicans (strain SC5314 / ATCC MYA-2876) (Yeast) protein is Mevalonate kinase.